Here is a 985-residue protein sequence, read N- to C-terminus: Vacuolar membrane protease (985 aa).

Residues 1-20 (MASSRAQRFNPIAFTPWPVT) are Cytoplasmic-facing. A helical transmembrane segment spans residues 21-41 (CITTIVYLALLIPILVINLVV). At 42 to 388 (PSAPETNPKG…MFGTAFAVFR (347 aa)) the chain is on the vacuolar side. Residues Asn-53, Asn-116, and Asn-119 are each glycosylated (N-linked (GlcNAc...) asparagine). Zn(2+) contacts are provided by His-175 and Asp-187. The active-site Proton acceptor is Glu-221. Glu-222 lines the Zn(2+) pocket. Asn-238 carries N-linked (GlcNAc...) asparagine glycosylation. Zn(2+) contacts are provided by Glu-247 and His-320. The helical transmembrane segment at 389–409 (LHTLFAISVALLVIAPLVIFV) threads the bilayer. Residues 410–440 (TNRMYLFSMSKSLEGTGDQVSLRGLRGFSRT) lie on the Cytoplasmic side of the membrane. Residues 441–461 (PIILVTATTIPICLAYLLEKV) form a helical membrane-spanning segment. Residues 462–470 (NPYIVHSSQ) are Vacuolar-facing. A helical membrane pass occupies residues 471–491 (FSVWSMMFSAWIFLAWFLACA). At 492–502 (ADFFRPSALHR) the chain is on the cytoplasmic side. A helical transmembrane segment spans residues 503–523 (AYSYTWIFIATWIMLVINTVY). Residues 524–527 (ANQK) lie on the Vacuolar side of the membrane. A helical transmembrane segment spans residues 528 to 548 (GIAAGYFLLFYFAGAFLATWI). At 549–666 (SYLELFALPR…TLPRWTWVLQ (118 aa)) the chain is on the cytoplasmic side. A disordered region spans residues 563–612 (ARQTTGRRPSSLSSRLLTSSADELRSNASPSTAEFPGAAGEDTDPTESTS). The span at 566–582 (TTGRRPSSLSSRLLTSS) shows a compositional bias: low complexity. The helical transmembrane segment at 667-687 (LLLLAPIVLILVGQLALFLTA) threads the bilayer. Topologically, residues 688 to 700 (SMCQVGSDGVSTF) are vacuolar. Residues 701-721 (VVYLACAVFTTLLCIPLFPLI) traverse the membrane as a helical segment. At 722–727 (HRFTYH) the chain is on the cytoplasmic side. A helical membrane pass occupies residues 728-748 (IPTFLFLVFIGTLIYNLVAFP). At 749–985 (FSPANRLKTF…VEASHSFTIQ (237 aa)) the chain is on the vacuolar side. N-linked (GlcNAc...) asparagine glycans are attached at residues Asn-767, Asn-795, and Asn-839.

The protein belongs to the peptidase M28 family. The cofactor is Zn(2+).

It is found in the vacuole membrane. Functionally, may be involved in vacuolar sorting and osmoregulation. The sequence is that of Vacuolar membrane protease from Ajellomyces capsulatus (strain G186AR / H82 / ATCC MYA-2454 / RMSCC 2432) (Darling's disease fungus).